The sequence spans 457 residues: Bifunctional protein GlmU (457 aa).

The tract at residues 1–229 (MYNCAIILAA…YEEIMGVNSR (229 aa)) is pyrophosphorylase. Residues 8–11 (LAAG), lysine 22, glutamine 73, and 78–79 (GT) contribute to the UDP-N-acetyl-alpha-D-glucosamine site. Residue aspartate 103 participates in Mg(2+) binding. Glycine 140, glutamate 155, asparagine 170, and asparagine 227 together coordinate UDP-N-acetyl-alpha-D-glucosamine. Asparagine 227 serves as a coordination point for Mg(2+). The tract at residues 230–250 (VQLSEAEIVMRKRINHKHMVN) is linker. Residues 251–457 (GVTFIDCEST…WLDKKGLLKK (207 aa)) are N-acetyltransferase. UDP-N-acetyl-alpha-D-glucosamine contacts are provided by arginine 332 and lysine 350. Histidine 362 functions as the Proton acceptor in the catalytic mechanism. Residues tyrosine 365 and asparagine 376 each coordinate UDP-N-acetyl-alpha-D-glucosamine. Residues 385 to 386 (NY), alanine 422, and arginine 439 contribute to the acetyl-CoA site.

This sequence in the N-terminal section; belongs to the N-acetylglucosamine-1-phosphate uridyltransferase family. It in the C-terminal section; belongs to the transferase hexapeptide repeat family. In terms of assembly, homotrimer. Mg(2+) is required as a cofactor.

It is found in the cytoplasm. The catalysed reaction is alpha-D-glucosamine 1-phosphate + acetyl-CoA = N-acetyl-alpha-D-glucosamine 1-phosphate + CoA + H(+). It catalyses the reaction N-acetyl-alpha-D-glucosamine 1-phosphate + UTP + H(+) = UDP-N-acetyl-alpha-D-glucosamine + diphosphate. It functions in the pathway nucleotide-sugar biosynthesis; UDP-N-acetyl-alpha-D-glucosamine biosynthesis; N-acetyl-alpha-D-glucosamine 1-phosphate from alpha-D-glucosamine 6-phosphate (route II): step 2/2. It participates in nucleotide-sugar biosynthesis; UDP-N-acetyl-alpha-D-glucosamine biosynthesis; UDP-N-acetyl-alpha-D-glucosamine from N-acetyl-alpha-D-glucosamine 1-phosphate: step 1/1. Its pathway is bacterial outer membrane biogenesis; LPS lipid A biosynthesis. In terms of biological role, catalyzes the last two sequential reactions in the de novo biosynthetic pathway for UDP-N-acetylglucosamine (UDP-GlcNAc). The C-terminal domain catalyzes the transfer of acetyl group from acetyl coenzyme A to glucosamine-1-phosphate (GlcN-1-P) to produce N-acetylglucosamine-1-phosphate (GlcNAc-1-P), which is converted into UDP-GlcNAc by the transfer of uridine 5-monophosphate (from uridine 5-triphosphate), a reaction catalyzed by the N-terminal domain. The polypeptide is Bifunctional protein GlmU (Clostridium botulinum (strain Langeland / NCTC 10281 / Type F)).